Consider the following 170-residue polypeptide: NADPH-dependent 7-cyano-7-deazaguanine reductase (170 aa).

Residue C58 is the Thioimide intermediate of the active site. The active-site Proton donor is D65. Residues 80–82 (VES) and 99–100 (HE) each bind substrate.

The protein belongs to the GTP cyclohydrolase I family. QueF type 1 subfamily.

The protein resides in the cytoplasm. The catalysed reaction is 7-aminomethyl-7-carbaguanine + 2 NADP(+) = 7-cyano-7-deazaguanine + 2 NADPH + 3 H(+). It participates in tRNA modification; tRNA-queuosine biosynthesis. Its function is as follows. Catalyzes the NADPH-dependent reduction of 7-cyano-7-deazaguanine (preQ0) to 7-aminomethyl-7-deazaguanine (preQ1). The sequence is that of NADPH-dependent 7-cyano-7-deazaguanine reductase from Bdellovibrio bacteriovorus (strain ATCC 15356 / DSM 50701 / NCIMB 9529 / HD100).